A 542-amino-acid chain; its full sequence is Major facilitator superfamily transporter mfsA (542 aa).

11 helical membrane-spanning segments follow: residues Phe-19 to Leu-39, Gly-70 to Cys-90, Leu-99 to Thr-119, Phe-127 to Gln-149, Phe-160 to Val-180, Phe-194 to Pro-214, Ile-321 to Ile-341, Leu-349 to Ile-369, Ala-380 to Ile-400, Val-413 to Phe-432, and Val-444 to Val-464.

This sequence belongs to the major facilitator superfamily. Sugar transporter (TC 2.A.1.1) family.

It is found in the membrane. Functionally, major facilitator superfamily transporter that may be involved in A.fumigatus adaptation to azoles such as vorizonazole. The chain is Major facilitator superfamily transporter mfsA from Aspergillus fumigatus (strain ATCC MYA-4609 / CBS 101355 / FGSC A1100 / Af293) (Neosartorya fumigata).